Here is a 299-residue protein sequence, read N- to C-terminus: Putative hydrolase YtaP (299 aa).

It belongs to the dienelactone hydrolase family.

In Bacillus subtilis (strain 168), this protein is Putative hydrolase YtaP (ytaP).